Here is a 93-residue protein sequence, read N- to C-terminus: Small ribosomal subunit protein uS19 (93 aa).

The protein belongs to the universal ribosomal protein uS19 family.

Protein S19 forms a complex with S13 that binds strongly to the 16S ribosomal RNA. This Thermus thermophilus (strain ATCC BAA-163 / DSM 7039 / HB27) protein is Small ribosomal subunit protein uS19 (rpsS).